The chain runs to 1134 residues: Phospholipid-transporting ATPase IH (1134 aa).

The Cytoplasmic portion of the chain corresponds to 1 to 61 (MDCSLVRTLV…SSKYTFWNFI (61 aa)). The helical transmembrane segment at 62 to 82 (PKNLFEQFRRVANFYFLIIFL) threads the bilayer. Residues 83 to 88 (VQLIID) lie on the Extracellular side of the membrane. Residues 89–110 (TPTSPVTSGLPLFFVITVTAIK) traverse the membrane as a helical segment. The Cytoplasmic segment spans residues 111-296 (QGYEDWLRHK…SAVEKSMNAF (186 aa)). A helical membrane pass occupies residues 297-318 (LIVYLCILISKALINTVLKYMW). At 319 to 349 (QSEPFRDEPWYNQKTESERQRNLFLKAFTDF) the chain is on the extracellular side. Residues 350-372 (LAFMVLFNYIIPVSMYVTVEMQK) form a helical membrane-spanning segment. Topologically, residues 373-881 (FLGSYFITWD…GHFYYIRISE (509 aa)) are cytoplasmic. D414 functions as the 4-aspartylphosphate intermediate in the catalytic mechanism. Residues D414, K415, T416, E511, F553, K576, R607, T687, G688, and D689 each contribute to the ATP site. Residue D414 coordinates Mg(2+). T416 lines the Mg(2+) pocket. A Phosphoserine modification is found at S738. R798 and K804 together coordinate ATP. D825 lines the Mg(2+) pocket. ATP is bound by residues N828 and D829. D829 contributes to the Mg(2+) binding site. A helical transmembrane segment spans residues 882–902 (LVQYFFYKNVCFIFPQFLYQF). Residues 903 to 914 (FCGFSQQTLYDT) lie on the Extracellular side of the membrane. The helical transmembrane segment at 915–934 (AYLTLYNISFTSLPILLYSL) threads the bilayer. At 935–964 (MEQHVGIDVLKRDPTLYRDVAKNALLRWRV) the chain is on the cytoplasmic side. Residues 965–986 (FIYWTLLGLFDALVFFFGAYFV) traverse the membrane as a helical segment. Residues 987–1000 (FENTTVTSNGQIFG) are Extracellular-facing. Residues 1001–1023 (NWTFGTLVFTVMVFTVTLKLALD) traverse the membrane as a helical segment. Residues 1024-1029 (THYWTW) are Cytoplasmic-facing. A helical membrane pass occupies residues 1030–1050 (INHFVIWGSLLFYVVFSLLWG). Residues 1051–1068 (GVIWPFLNYQRMYYVFIQ) are Extracellular-facing. A helical membrane pass occupies residues 1069 to 1093 (MLSSGPAWLAIVLLVTISLLPDVLK). Over 1094–1134 (KVLCRQLWPTATERVQTKSQCLSVEQSTIFMLSQTSSSLSF) the chain is Cytoplasmic.

Belongs to the cation transport ATPase (P-type) (TC 3.A.3) family. Type IV subfamily. Component of a P4-ATPase flippase complex which consists of a catalytic alpha subunit ATP11A and an accessory beta subunit TMEM30A. It depends on Mg(2+) as a cofactor. In terms of processing, proteolytically cleaved by CASP3. In terms of tissue distribution, widely expressed. Expressed in myoblasts.

Its subcellular location is the cell membrane. It is found in the early endosome. The protein localises to the recycling endosome. It localises to the endoplasmic reticulum membrane. It carries out the reaction ATP + H2O + phospholipidSide 1 = ADP + phosphate + phospholipidSide 2.. It catalyses the reaction a 1,2-diacyl-sn-glycero-3-phospho-L-serine(out) + ATP + H2O = a 1,2-diacyl-sn-glycero-3-phospho-L-serine(in) + ADP + phosphate + H(+). The catalysed reaction is a 1,2-diacyl-sn-glycero-3-phosphoethanolamine(out) + ATP + H2O = a 1,2-diacyl-sn-glycero-3-phosphoethanolamine(in) + ADP + phosphate + H(+). Its activity is regulated as follows. The flippase activity is inactivated by caspase-mediated cleavage in apoptotic cells, allowing for PS exposure on the cell surface and engulfment of apoptotic cells by macrophages. The ATPase activity is up-regulated by aminophospholipids PS and PE and down-regulated by increasing intracellular Ca2+ levels. Functionally, catalytic component of a P4-ATPase flippase complex which catalyzes the hydrolysis of ATP coupled to the transport of aminophospholipids, phosphatidylserines (PS) and phosphatidylethanolamines (PE), from the outer to the inner leaflet of the plasma membrane. Does not show flippase activity toward phosphatidylcholine (PC). Contributes to the maintenance of membrane lipid asymmetry with a specific role in morphogenesis of muscle cells. In myoblasts, mediates PS enrichment at the inner leaflet of plasma membrane, triggering PIEZO1-dependent Ca2+ influx and Rho GTPases signal transduction, subsequently leading to the assembly of cortical actomyosin fibers and myotube formation. May be involved in the uptake of farnesyltransferase inhibitor drugs, such as lonafarnib. This Homo sapiens (Human) protein is Phospholipid-transporting ATPase IH (ATP11A).